A 194-amino-acid polypeptide reads, in one-letter code: Large ribosomal subunit protein bL9 (194 aa).

Residues 166 to 184 are compositionally biased toward low complexity; the sequence is AENQAQADEQAGELAAAAA. A disordered region spans residues 166–194; that stretch reads AENQAQADEQAGELAAAAAERGDMGGDEE. Positions 185 to 194 are enriched in basic and acidic residues; that stretch reads ERGDMGGDEE.

This sequence belongs to the bacterial ribosomal protein bL9 family.

Binds to the 23S rRNA. This chain is Large ribosomal subunit protein bL9, found in Hyphomonas neptunium (strain ATCC 15444).